We begin with the raw amino-acid sequence, 143 residues long: Transcriptional regulator MraZ (143 aa).

2 SpoVT-AbrB domains span residues 5 to 47 and 76 to 119; these read THHP…PRAE and TDEQ…NAER.

The protein belongs to the MraZ family. Forms oligomers.

The protein resides in the cytoplasm. Its subcellular location is the nucleoid. The sequence is that of Transcriptional regulator MraZ from Saccharopolyspora erythraea (strain ATCC 11635 / DSM 40517 / JCM 4748 / NBRC 13426 / NCIMB 8594 / NRRL 2338).